A 433-amino-acid polypeptide reads, in one-letter code: DNA polymerase processivity factor (433 aa).

Positions 274–433 are disordered; the sequence is RGDPFDKNYV…VPNTKKQKCG (160 aa). Residues 298 to 307 show a composition bias toward low complexity; it reads SLSSLANAGG. Gly residues-rich tracts occupy residues 325 to 336 and 344 to 359; these read GLGGLGGGGGGG and GGGG…GGGG. Residues 360-376 show a composition bias toward basic and acidic residues; it reads GDHDHGLSSKEKYEQHK. Positions 385 to 398 are enriched in gly residues; sequence GGSGGGGGGGGGGL.

It belongs to the herpesviridae polymerase accessory protein family. Forms homodimers. Interacts with host SMARCB1. Interacts with host NCL/nucleolin; this interaction is important for the organization of proteins within viral replication compartments. Interacts with UL112/UL113; this interaction is necessary for efficient viral DNA replication. Interacts with UL84. Interacts with the uracil DNA glycosylase UL114. Interacts with the DNA polymerase catalytic subunit UL54. Interacts with host IRF3. Interacts with host RELA. In terms of processing, phosphorylated by UL97 on serine residues, phosphorylation seems important for UL44 nuclear entry but does not directly affect its role in replication. Sumoylated. Sumoylation on Lys-410 increases viral DNA replication.

Its subcellular location is the virion. It localises to the host nucleus. Its function is as follows. Accessory subunit of the DNA polymerase that plays an essential role in viral DNA replication and acts by increasing the processivity of polymerization. Forms dimers that binds to double-stranded DNA and UL54 specifically to stimulates long chain DNA synthesis efficiently. Plays an important role in maintaining the structure of viral replication compartments by interacting with host nucleolin/NUC. In addition, suppresses innate immune responses through effects on host IRF3 and NF-kappa-B. Mechanistically, interfere with the binding of IRF3 and the p65 NF-kappa-B subunit to the promoters of antiviral genes, thereby inhibiting the expression of these genes. This Human cytomegalovirus (strain Merlin) (HHV-5) protein is DNA polymerase processivity factor (UL44).